Reading from the N-terminus, the 64-residue chain is Prokaryotic ubiquitin-like protein Pup (64 aa).

The segment at 1 to 38 is disordered; sequence MAQEQTKRGGGGGEDDDPTGSTAAGQERREKLTEETDD. An ARC ATPase binding region spans residues 21–58; it reads STAAGQERREKLTEETDDLLDEIDDVLEENAEDFVRAY. Residues 23–52 adopt a coiled-coil conformation; that stretch reads AAGQERREKLTEETDDLLDEIDDVLEENAE. Q64 bears the Deamidated glutamine mark. Q64 is covalently cross-linked (Isoglutamyl lysine isopeptide (Gln-Lys) (interchain with K-? in acceptor proteins)).

Belongs to the prokaryotic ubiquitin-like protein family. As to quaternary structure, strongly interacts with the proteasome-associated ATPase ARC through a hydrophobic interface; the interacting region of Pup lies in its C-terminal half. There is one Pup binding site per ARC hexamer ring. In terms of processing, is modified by deamidation of its C-terminal glutamine to glutamate by the deamidase Dop, a prerequisite to the subsequent pupylation process.

It functions in the pathway protein degradation; proteasomal Pup-dependent pathway. Its function is as follows. Protein modifier that is covalently attached to lysine residues of substrate proteins, thereby targeting them for proteasomal degradation. The tagging system is termed pupylation. In Mycolicibacterium gilvum (strain PYR-GCK) (Mycobacterium gilvum (strain PYR-GCK)), this protein is Prokaryotic ubiquitin-like protein Pup.